Consider the following 375-residue polypeptide: Glutamate 5-kinase (375 aa).

ATP is bound at residue lysine 17. Positions 57, 144, and 156 each coordinate substrate. 176 to 177 (TD) provides a ligand contact to ATP. Positions 283 to 361 (KGELILDTGA…DEIEGILGYV (79 aa)) constitute a PUA domain.

Belongs to the glutamate 5-kinase family.

It localises to the cytoplasm. The enzyme catalyses L-glutamate + ATP = L-glutamyl 5-phosphate + ADP. It functions in the pathway amino-acid biosynthesis; L-proline biosynthesis; L-glutamate 5-semialdehyde from L-glutamate: step 1/2. Catalyzes the transfer of a phosphate group to glutamate to form L-glutamate 5-phosphate. The protein is Glutamate 5-kinase of Thioalkalivibrio sulfidiphilus (strain HL-EbGR7).